Consider the following 351-residue polypeptide: Phosphoribosylformylglycinamidine cyclo-ligase (351 aa).

This sequence belongs to the AIR synthase family.

Its subcellular location is the cytoplasm. The enzyme catalyses 2-formamido-N(1)-(5-O-phospho-beta-D-ribosyl)acetamidine + ATP = 5-amino-1-(5-phospho-beta-D-ribosyl)imidazole + ADP + phosphate + H(+). Its pathway is purine metabolism; IMP biosynthesis via de novo pathway; 5-amino-1-(5-phospho-D-ribosyl)imidazole from N(2)-formyl-N(1)-(5-phospho-D-ribosyl)glycinamide: step 2/2. This Synechococcus sp. (strain JA-3-3Ab) (Cyanobacteria bacterium Yellowstone A-Prime) protein is Phosphoribosylformylglycinamidine cyclo-ligase.